Reading from the N-terminus, the 1072-residue chain is Zinc finger MIZ domain-containing protein 1 (1072 aa).

The tract at residues 1-120 (MNSMDRHIQQ…HQKSRQNDPP (120 aa)) is sufficient for transactivation activity; sufficient for interaction with NOTCH1. A Glycyl lysine isopeptide (Lys-Gly) (interchain with G-Cter in SUMO2) cross-link involves residue Lys-91. Disordered regions lie at residues 112–141 (QKSRQNDPPGKLPMQPPLSSMSSMKPTLSH) and 362–538 (TPSG…PYLS). A compositionally biased stretch (low complexity) spans 128-141 (PLSSMSSMKPTLSH). The segment covering 419–436 (YGNQQYGPNSQFPTQPGQ) has biased composition (polar residues). A compositionally biased stretch (pro residues) spans 437–446 (YPTPNPPRPL). Low complexity predominate over residues 489-501 (SSGSSYSSYSQGS). A compositionally biased stretch (pro residues) spans 517–528 (SPVPGNPTPPMT). Residues 734–815 (GEDGVEQTAI…MWGILNAIQH (82 aa)) form an SP-RING-type zinc finger. Residues Cys-765, His-767, Cys-788, and Cys-791 each contribute to the Zn(2+) site. Glycyl lysine isopeptide (Lys-Gly) (interchain with G-Cter in SUMO2) cross-links involve residues Lys-841 and Lys-850. The tract at residues 844–1072 (PDGIPSKRFK…DDLLSLFENN (229 aa)) is transactivation domain. The segment covering 875–886 (GPSPYPLPPPPG) has biased composition (pro residues). The disordered stretch occupies residues 875–1072 (GPSPYPLPPP…DDLLSLFENN (198 aa)). Composition is skewed to polar residues over residues 888 to 902 (TSSNDYSSQGNNYQG) and 958 to 968 (SSDQPHPSIQQ). The segment covering 988-1001 (APPPSQPPRQPPQA) has biased composition (pro residues). Positions 1045–1072 (PDELLSYLDPPDLPSNSNDDLLSLFENN) are enriched in low complexity.

As to quaternary structure, interacts with AR, but not with ESR1, NR3C1, PGR, THRB nor VDR. Interacts with NOTCH1 and RBPJ. Interacts with SMARCA4. Interacts (via SP-RING-type domain) with SMAD3 and SMAD4 (via MH2 domain). As to expression, expressed in brain.

It is found in the nucleus. The protein resides in the nucleoplasm. Its subcellular location is the cytoplasm. Acts as a transcriptional coactivator. Increases ligand-dependent transcriptional activity of AR and promotes AR sumoylation. The stimulation of AR activity is dependent upon sumoylation. Also functions as a transcriptional coactivator in the TGF-beta signaling pathway by increasing the activity of the SMAD3/SMAD4 transcriptional complex. Involved in transcriptional activation of a subset of NOTCH1 target genes including MYC. Involved in thymocyte and T cell development. Involved in the regulation of postmitotic positioning of pyramidal neurons in the developing cerebral cortex. This Mus musculus (Mouse) protein is Zinc finger MIZ domain-containing protein 1 (Zmiz1).